Reading from the N-terminus, the 304-residue chain is DnaJ homolog subfamily C member 17 (304 aa).

The J domain maps to 11–76 (DLYALLGIEE…AARAAYDKVR (66 aa)). Residues 79–106 (KKQAAERTQKLDEKRKKVKLDLEARERQ) show a composition bias toward basic and acidic residues. The interval 79-145 (KKQAAERTQK…SRQLEEQQRL (67 aa)) is disordered. Ser112 carries the phosphoserine modification. Basic and acidic residues predominate over residues 118–145 (SRSTRTLEQEIERLREEGSRQLEEQQRL). Residues 178–249 (KCKKEDESKG…NPLKISWLEG (72 aa)) enclose the RRM domain. An N6-methyllysine modification is found at Lys264.

It is found in the cytoplasm. It localises to the nucleus. Functionally, may negatively affect PAX8-induced thyroglobulin/TG transcription. In Homo sapiens (Human), this protein is DnaJ homolog subfamily C member 17 (DNAJC17).